The primary structure comprises 172 residues: Large ribosomal subunit protein uL10 (172 aa).

It belongs to the universal ribosomal protein uL10 family. In terms of assembly, part of the ribosomal stalk of the 50S ribosomal subunit. The N-terminus interacts with L11 and the large rRNA to form the base of the stalk. The C-terminus forms an elongated spine to which L12 dimers bind in a sequential fashion forming a multimeric L10(L12)X complex.

Its function is as follows. Forms part of the ribosomal stalk, playing a central role in the interaction of the ribosome with GTP-bound translation factors. The polypeptide is Large ribosomal subunit protein uL10 (Brucella abortus (strain S19)).